The primary structure comprises 124 residues: Small ribosomal subunit protein uS12 (124 aa).

At aspartate 89 the chain carries 3-methylthioaspartic acid.

This sequence belongs to the universal ribosomal protein uS12 family. As to quaternary structure, part of the 30S ribosomal subunit. Contacts proteins S8 and S17. May interact with IF1 in the 30S initiation complex.

With S4 and S5 plays an important role in translational accuracy. Functionally, interacts with and stabilizes bases of the 16S rRNA that are involved in tRNA selection in the A site and with the mRNA backbone. Located at the interface of the 30S and 50S subunits, it traverses the body of the 30S subunit contacting proteins on the other side and probably holding the rRNA structure together. The combined cluster of proteins S8, S12 and S17 appears to hold together the shoulder and platform of the 30S subunit. This chain is Small ribosomal subunit protein uS12, found in Shewanella amazonensis (strain ATCC BAA-1098 / SB2B).